The chain runs to 448 residues: Protein chibby homolog 2 (448 aa).

Residues Ser41, Ser86, Ser89, Ser97, Ser124, Ser144, Ser148, and Ser150 each carry the phosphoserine modification. Positions 164–198 form a coiled coil; sequence KECMLQEENKSLREENKALREENRMLSKENKILQV. Phosphoserine is present on residues Ser212 and Ser225. Residues 242 to 267 are a coiled coil; the sequence is KEDSTLQLLREENRALQQLLEQKQAY. Residues 270–323 are disordered; that stretch reads QAEDTAAPAEESKPAPSPHEEPCSPGLLQDQGSGLSSRFEEPKGPPARQEDSKE. Basic and acidic residues-rich tracts occupy residues 279-291 and 307-323; these read EESK…HEEP and RFEE…DSKE. Ser335 and Ser338 each carry phosphoserine. A coiled-coil region spans residues 356–414; the sequence is LQLLREMRQALQALLKENRLLQEENRTLQVLRAEHRGFQEENKALWENNKLKLQQKLVI.

This sequence belongs to the chibby family. SPERT subfamily. As to quaternary structure, homodimer. Binds to NEK1. Testis-specific.

The sequence is that of Protein chibby homolog 2 from Homo sapiens (Human).